Consider the following 232-residue polypeptide: Large ribosomal subunit protein uL1 (232 aa).

It belongs to the universal ribosomal protein uL1 family. Part of the 50S ribosomal subunit.

Functionally, binds directly to 23S rRNA. The L1 stalk is quite mobile in the ribosome, and is involved in E site tRNA release. Protein L1 is also a translational repressor protein, it controls the translation of the L11 operon by binding to its mRNA. The polypeptide is Large ribosomal subunit protein uL1 (Coxiella burnetii (strain RSA 331 / Henzerling II)).